A 458-amino-acid polypeptide reads, in one-letter code: uncharacterized protein (458 aa).

Residues 8–66 form the TRAM domain; the sequence is PVEKNEFIDVVFEDLTHDGAGVAKVKGYPIFVKNGLPGEEAQIKIIKVKKNFAFGRLMK. [4Fe-4S] cluster is bound by residues Cys-79, Cys-85, Cys-88, and Cys-166. Residues Gln-290, Tyr-319, Glu-340, and Asp-388 each coordinate S-adenosyl-L-methionine. Catalysis depends on Cys-415, which acts as the Nucleophile.

Belongs to the class I-like SAM-binding methyltransferase superfamily. RNA M5U methyltransferase family.

This is an uncharacterized protein from Bacillus cereus (strain ATCC 14579 / DSM 31 / CCUG 7414 / JCM 2152 / NBRC 15305 / NCIMB 9373 / NCTC 2599 / NRRL B-3711).